Reading from the N-terminus, the 77-residue chain is Ribonuclease P protein component 1 (77 aa).

The protein belongs to the eukaryotic/archaeal RNase P protein component 1 family. As to quaternary structure, consists of a catalytic RNA component and at least 4-5 protein subunits.

It is found in the cytoplasm. The enzyme catalyses Endonucleolytic cleavage of RNA, removing 5'-extranucleotides from tRNA precursor.. In terms of biological role, part of ribonuclease P, a protein complex that generates mature tRNA molecules by cleaving their 5'-ends. The sequence is that of Ribonuclease P protein component 1 from Sulfurisphaera tokodaii (strain DSM 16993 / JCM 10545 / NBRC 100140 / 7) (Sulfolobus tokodaii).